Here is a 465-residue protein sequence, read N- to C-terminus: VGFKAGVKDYKLTYYTPEYEVKDTDILAAFRVTPQPGVPPEEAGAAVAAESSTGTWTTVWTDGLTSLDRYKGRCYNIEPVAGEESQFIAYVAYPLDLFEEGSVTNMFTSIVGNVFGFKALRALRLEDLRIPNAYIKTFQGPPHGIQVERDKLNKYGRPLLGCTIKPKLGLSAKNYGRAVYECLRGGLDFTKDDENVNSQPFMRWRDRFLFCAEAIYKSQAETGEIKGHYLNATAGTCEEMMKRAVFARELGVPIVMHDYLTGGFTANTTLAHYCRDNGLLLHIHRAMHAVIDRQKNHGMHFRVLAKALRMSGGDHIHAGTVVGKLEGEREITLGFVDLLRDDFIEKDRSRGIYFTQDWVSLPGVLPVASGGIHVWHMPALTEIFGDDSVLQFGGGTLGHPWGNAPGAVANRVALEACVKARNEGRDLAVEGNEIIREASKWSPELAAACEVWKEIKFEFEAMDTL.

N6,N6,N6-trimethyllysine is present on K4. The substrate site is built by N113 and T163. K165 serves as the catalytic Proton acceptor. K167 lines the substrate pocket. Mg(2+) contacts are provided by K191, D193, and E194. K191 carries the post-translational modification N6-carboxylysine. H284 (proton acceptor) is an active-site residue. Positions 285, 317, and 369 each coordinate substrate.

It belongs to the RuBisCO large chain family. Type I subfamily. In terms of assembly, heterohexadecamer of 8 large chains and 8 small chains; disulfide-linked. The disulfide link is formed within the large subunit homodimers. It depends on Mg(2+) as a cofactor. In terms of processing, the disulfide bond which can form in the large chain dimeric partners within the hexadecamer appears to be associated with oxidative stress and protein turnover.

It localises to the plastid. Its subcellular location is the chloroplast. It carries out the reaction 2 (2R)-3-phosphoglycerate + 2 H(+) = D-ribulose 1,5-bisphosphate + CO2 + H2O. The enzyme catalyses D-ribulose 1,5-bisphosphate + O2 = 2-phosphoglycolate + (2R)-3-phosphoglycerate + 2 H(+). In terms of biological role, ruBisCO catalyzes two reactions: the carboxylation of D-ribulose 1,5-bisphosphate, the primary event in carbon dioxide fixation, as well as the oxidative fragmentation of the pentose substrate in the photorespiration process. Both reactions occur simultaneously and in competition at the same active site. The protein is Ribulose bisphosphate carboxylase large chain of Morus rubra (Red mulberry).